We begin with the raw amino-acid sequence, 315 residues long: Probable mannose-6-phosphate isomerase GmuF (315 aa).

Zn(2+) is bound by residues Gln95, His97, Glu115, and His172. The active site involves Arg192.

This sequence belongs to the mannose-6-phosphate isomerase type 1 family. It depends on Zn(2+) as a cofactor.

It carries out the reaction D-mannose 6-phosphate = D-fructose 6-phosphate. Seems to be involved in the degradation of glucomannan. This chain is Probable mannose-6-phosphate isomerase GmuF (gmuF), found in Bacillus subtilis (strain 168).